We begin with the raw amino-acid sequence, 164 residues long: Transcription elongation factor GreA (164 aa).

The stretch at 50–75 (YHAAREEQGQQEARIRQLQDLLNIAK) forms a coiled coil.

It belongs to the GreA/GreB family.

Its function is as follows. Necessary for efficient RNA polymerase transcription elongation past template-encoded arresting sites. The arresting sites in DNA have the property of trapping a certain fraction of elongating RNA polymerases that pass through, resulting in locked ternary complexes. Cleavage of the nascent transcript by cleavage factors such as GreA or GreB allows the resumption of elongation from the new 3'terminus. GreA releases sequences of 2 to 3 nucleotides. The polypeptide is Transcription elongation factor GreA (Mycobacterium leprae (strain Br4923)).